A 691-amino-acid polypeptide reads, in one-letter code: Seven transmembrane domain-containing tyrosine-protein kinase 1 (691 aa).

Topologically, residues 1–33 (MDTSCVSINQCGFCTYLFNRSIPLAGEGDGAIM) are extracellular. The chain crosses the membrane as a helical span at residues 34-54 (FNTMVDSMALGYIFSALYLLF). Over 55-126 (RLQRSYTYLQ…PRIINSTYFK (72 aa)) the chain is Cytoplasmic. The chain crosses the membrane as a helical span at residues 127–144 (YTLFVSLWLAFEGLLLLF). At 145–153 (LPPNSLAYP) the chain is on the extracellular side. The helical transmembrane segment at 154 to 176 (AFVIIVGTGHIVTDNWVLVFLYG) threads the bilayer. Residues 177-186 (KEDDRFSARR) lie on the Cytoplasmic side of the membrane. Residues 187–207 (SFYSCTLLYLIICCTTLASFF) traverse the membrane as a helical segment. Topologically, residues 208 to 227 (DDQTMCKKNDCQTFMFQDEY) are extracellular. Residues 228–248 (TSLAITVASLVVYTIVLGMTI) traverse the membrane as a helical segment. Over 249-258 (KRSFLRPTGR) the chain is Cytoplasmic. The helical transmembrane segment at 259–279 (IWLLFLMGYNCISSVGALLNI) threads the bilayer. The Extracellular segment spans residues 280-284 (LDVDA). A helical transmembrane segment spans residues 285-305 (GYCFLGIAAIIYSFSYGPLLF). Residues 306 to 691 (RTCGNDTNLL…GAEEFHYIDG (386 aa)) are Cytoplasmic-facing. In terms of domain architecture, Protein kinase spans 363-634 (FKFGQVIGEG…ANVPISNTYV (272 aa)). Residues 369–377 (IGEGYFGEV) and lysine 390 each bind ATP. Aspartate 493 functions as the Proton acceptor in the catalytic mechanism.

Belongs to the protein kinase superfamily. TKL Tyr protein kinase family.

The protein resides in the membrane. It catalyses the reaction L-tyrosyl-[protein] + ATP = O-phospho-L-tyrosyl-[protein] + ADP + H(+). This chain is Seven transmembrane domain-containing tyrosine-protein kinase 1 (7tmk1), found in Dictyostelium discoideum (Social amoeba).